A 160-amino-acid chain; its full sequence is uncharacterized protein (160 aa).

Positions 69 to 145 (NQLLNMMAQA…EQREHVKEQR (77 aa)) form a coiled coil. Disordered stretches follow at residues 82–109 (GVRLQGRRQKKINPKRLQRQVSKELKNA) and 129–160 (KKKQIMKEQREHVKEQRYMLKKQKAKKKHRGK). Residues 86–99 (QGRRQKKINPKRLQ) are compositionally biased toward basic residues. Over residues 133-146 (IMKEQREHVKEQRY) the composition is skewed to basic and acidic residues. The segment covering 147–160 (MLKKQKAKKKHRGK) has biased composition (basic residues).

This is an uncharacterized protein from Bacillus subtilis (strain 168).